The chain runs to 280 residues: Bis(5'-nucleosyl)-tetraphosphatase, symmetrical (280 aa).

It belongs to the Ap4A hydrolase family.

The catalysed reaction is P(1),P(4)-bis(5'-adenosyl) tetraphosphate + H2O = 2 ADP + 2 H(+). Its function is as follows. Hydrolyzes diadenosine 5',5'''-P1,P4-tetraphosphate to yield ADP. In Shigella boydii serotype 18 (strain CDC 3083-94 / BS512), this protein is Bis(5'-nucleosyl)-tetraphosphatase, symmetrical.